We begin with the raw amino-acid sequence, 1237 residues long: MEINRAEIRREITRYAGLIEQQTQINITDNDQDILKTLIADYNLRMRRDALLGELARLDELRDISQIKGDEYKLTIPLLPIISTLNQHEFEIIQANIETDFIADNVTFITSFIPADLDLEQTIQHVFFRTTATTPYFRSFNLVIAILDYDEDKGDVKLDVKITITRSNNGVFNYNYTWAGKDYERVSICYNLISYLQQINGPRGRDDEAEMPIYEIVRQNNGSQPSYASGEHLYIVSSHLHVDEIVRDREHRDISVDVTELNLMFPIVRMFDPVDLRDIRIEDVTPGIEFTINMEVSTYLTELSGSHVDTQRTIMNHAEKIVGNYTGQQWNVQSNMLSEVRTQKLEEEDEEARQRGDYTTSTLVQTMAQVSDLFSSTILYRYAEAELDNTVGAFELLRPVMSIPTEYIHDGRIGPITNISASASIVTSSNNGVGEVRNIFKPIGDQTINEAHFANVYSNDEYAIYLRFSYRQAPVQSETVYLQQALPSMRIVSPSSVSTTVSTALIGGNTIRINCPIRPHREDNFVAGGVQIPRQSTAVEIHVQEILIGYRQATTFPIDTEGRLSLELMYGLESRSAVGNTMSPVRFVTVNDGEFFGLTCPIDLTLSTIVDPASYLSDGVILVTTAFEDLRGYAWLATLGGDWPRTYNSSMGAFNIFTGGDINLSTEYGSEMTYTFKVELPINYMFNNMTISSHNVPRVPVLGVTYASIYQDSRTDLEARRFLQTLVFRIHGSWSARVPYPPGNLPTRNTANQHQDIQQVINDSIFQELDRLSDELLDLENRLDHLERQFEMFIQSQESEWWEILLNVVIDISIGYFSTFAGDALKNAQRAITKAVGYTRRVLMTVTKTMRNGTIFTRLLGAKNLSGQALASLETLVESALRSINMKKSRFMRGAEPLYKTNKVAQHIDNTEKMNMMMDFSFANRNNRQNITADTLSKMHTQNAHGTSDTILPAMRVYYRPLGFLDKRVGDALHTGITRPEALKKQLRSDVANVGTRAPSHAFMTYTDVLYEDAGSYIVSKRYLGIGELNKFGRTTSDKNAGIGGVNIKYRVNKITADGKYIIDRLDYTESGYTALDVDRLYSSLFGKQGDGLSTEQKWMDISKGVDAKIISADMVSEEFLSSKYTGQMIDELINSPPQFNYSLVYRNCQDFALDVLRVAQGFSPSNKWDVSTAARMQQRRVISLMDDLMGESETFARSGRASQLLLRQVRESYVKARKRGDLQAVKALQLRFKGFF.

One can recognise a PPPDE domain in the interval 963–1178; that stretch reads GFLDKRVGDA…WDVSTAARMQ (216 aa). Residues His-1001 and Cys-1149 contribute to the active site.

Its subcellular location is the virion. The sequence is that of Putative structural protein VP3 (S3) from Lymantria dispar cypovirus 1 (isolate Rao) (LdCPV-1).